Here is a 156-residue protein sequence, read N- to C-terminus: Regulatory protein RecX (156 aa).

Belongs to the RecX family.

It localises to the cytoplasm. Modulates RecA activity. The sequence is that of Regulatory protein RecX from Pseudomonas putida (strain GB-1).